A 284-amino-acid chain; its full sequence is Thymidylate synthase (284 aa).

Arg34 provides a ligand contact to dUMP. Residue His64 participates in (6R)-5,10-methylene-5,6,7,8-tetrahydrofolate binding. 139 to 140 (RR) is a binding site for dUMP. The active-site Nucleophile is the Cys159. DUMP contacts are provided by residues 186–189 (RSAD), Asn197, and 227–229 (HIY). Asp189 is a binding site for (6R)-5,10-methylene-5,6,7,8-tetrahydrofolate. Residue Ala283 coordinates (6R)-5,10-methylene-5,6,7,8-tetrahydrofolate.

Belongs to the thymidylate synthase family. Bacterial-type ThyA subfamily. Homodimer.

It is found in the cytoplasm. It catalyses the reaction dUMP + (6R)-5,10-methylene-5,6,7,8-tetrahydrofolate = 7,8-dihydrofolate + dTMP. It participates in pyrimidine metabolism; dTTP biosynthesis. Catalyzes the reductive methylation of 2'-deoxyuridine-5'-monophosphate (dUMP) to 2'-deoxythymidine-5'-monophosphate (dTMP) while utilizing 5,10-methylenetetrahydrofolate (mTHF) as the methyl donor and reductant in the reaction, yielding dihydrofolate (DHF) as a by-product. This enzymatic reaction provides an intracellular de novo source of dTMP, an essential precursor for DNA biosynthesis. This is Thymidylate synthase from Polaromonas sp. (strain JS666 / ATCC BAA-500).